A 440-amino-acid polypeptide reads, in one-letter code: tRNA(Ile)-lysidine synthase (440 aa).

28–33 (SGGMDS) provides a ligand contact to ATP.

The protein belongs to the tRNA(Ile)-lysidine synthase family.

It localises to the cytoplasm. The catalysed reaction is cytidine(34) in tRNA(Ile2) + L-lysine + ATP = lysidine(34) in tRNA(Ile2) + AMP + diphosphate + H(+). Functionally, ligates lysine onto the cytidine present at position 34 of the AUA codon-specific tRNA(Ile) that contains the anticodon CAU, in an ATP-dependent manner. Cytidine is converted to lysidine, thus changing the amino acid specificity of the tRNA from methionine to isoleucine. This chain is tRNA(Ile)-lysidine synthase, found in Xanthomonas axonopodis pv. citri (strain 306).